The following is a 665-amino-acid chain: GTPase IMAP family member 8 (665 aa).

In terms of domain architecture, AIG1-type G 1 spans 8-210; sequence MSELRLLLLG…HVNFKTEGSR (203 aa). The G1 stretch occupies residues 17-24; that stretch reads GKCRSGKS. GTP is bound by residues 17–25 and serine 38; that span reads GKCRSGKSA. The tract at residues 44-48 is G2; sequence TVIKM. Positions 65–68 are G3; sequence DTPD. The tract at residues 134 to 137 is G4; it reads TRKD. GTP contacts are provided by residues 135-137 and asparagine 170; that span reads RKD. The segment at 169–171 is G5; the sequence is NNK. The interval 217–246 is disordered; it reads EAASQEGDKPQGPRERQLQSTGPEQNPGTS. The span at 222–233 shows a compositional bias: basic and acidic residues; that stretch reads EGDKPQGPRERQ. Polar residues predominate over residues 234 to 246; sequence LQSTGPEQNPGTS. 2 AIG1-type G domains span residues 245–435 and 436–644; these read TSEL…VFRE and KETL…SKLI. Coiled-coil stretches lie at residues 400–427 and 608–657; these read NYRATGEEEQRQADELLEKIESMVHQNG and QAQE…EKLL.

The protein belongs to the TRAFAC class TrmE-Era-EngA-EngB-Septin-like GTPase superfamily. AIG1/Toc34/Toc159-like paraseptin GTPase family. IAN subfamily. In terms of tissue distribution, expressed in the spleen, intestine, liver, and colon, as well as in lung, placenta, kidney, muscle, and heart. Extremely low expression, if any, in brain, in thymus, bone marrow, and blood leukocytes. Detected in T-cells.

The protein localises to the endoplasmic reticulum. It localises to the golgi apparatus. The protein resides in the mitochondrion. It is found in the cytoplasm. Its subcellular location is the cytosol. In terms of biological role, exerts an anti-apoptotic effect in the immune system and is involved in responses to infections. This chain is GTPase IMAP family member 8 (GIMAP8), found in Homo sapiens (Human).